Here is a 265-residue protein sequence, read N- to C-terminus: Ribosomal RNA small subunit methyltransferase G (265 aa).

Residues Gly-75, Leu-80, and Arg-145 each coordinate S-adenosyl-L-methionine. The interval 212–265 (RAVRSSQRTRAESRGGRGDGERHDGRQVRRTSRDSLRSREVGRDQPTRGQSRST) is disordered. Positions 220 to 257 (TRAESRGGRGDGERHDGRQVRRTSRDSLRSREVGRDQP) are enriched in basic and acidic residues.

Belongs to the methyltransferase superfamily. RNA methyltransferase RsmG family.

The protein localises to the cytoplasm. Specifically methylates the N7 position of guanine in position 518 of 16S rRNA. This Frankia casuarinae (strain DSM 45818 / CECT 9043 / HFP020203 / CcI3) protein is Ribosomal RNA small subunit methyltransferase G.